Consider the following 373-residue polypeptide: Transaldolase (373 aa).

Lys-143 functions as the Schiff-base intermediate with substrate in the catalytic mechanism.

Belongs to the transaldolase family. Type 2 subfamily.

Its subcellular location is the cytoplasm. It catalyses the reaction D-sedoheptulose 7-phosphate + D-glyceraldehyde 3-phosphate = D-erythrose 4-phosphate + beta-D-fructose 6-phosphate. Its pathway is carbohydrate degradation; pentose phosphate pathway; D-glyceraldehyde 3-phosphate and beta-D-fructose 6-phosphate from D-ribose 5-phosphate and D-xylulose 5-phosphate (non-oxidative stage): step 2/3. Functionally, transaldolase is important for the balance of metabolites in the pentose-phosphate pathway. The polypeptide is Transaldolase (tal) (Mycobacterium tuberculosis (strain ATCC 25618 / H37Rv)).